Reading from the N-terminus, the 1210-residue chain is Homeodomain-interacting protein kinase 1 (1210 aa).

Lysine 25 participates in a covalent cross-link: Glycyl lysine isopeptide (Lys-Gly) (interchain with G-Cter in SUMO); alternate. Lysine 25 is covalently cross-linked (Glycyl lysine isopeptide (Lys-Gly) (interchain with G-Cter in SUMO2); alternate). Glycyl lysine isopeptide (Lys-Gly) (interchain with G-Cter in SUMO2) cross-links involve residues lysine 120 and lysine 124. Residues 190–518 (YEVLEFLGRG…PLKTLNHQFV (329 aa)) enclose the Protein kinase domain. ATP-binding positions include 196-204 (LGRGTFGQV) and lysine 219. Catalysis depends on aspartate 315, which acts as the Proton acceptor. Residues 835-856 (QQQSSSLPSKKNKQSAPVSSKS) form a disordered region. A Nuclear localization signal 1 (NLS1) motif is present at residues 844–847 (KKNK). Serine 872 is subject to Phosphoserine. The interval 885–1093 (PVQDQHQPII…FQHGSPLHST (209 aa)) is interaction with TP53. The tract at residues 891 to 998 (QPIIIPDTPS…PLKTQLGDCT (108 aa)) is required for localization to nuclear speckles. Positions 902-926 (PVSVITIRSDTDEEEDNKYKPNSSS) are SUMO interaction motifs (SIM); required for nuclear localization and kinase activity. A disordered region spans residues 938–981 (TVNDSPDSDSSLSSPHPTDTLSALRGNSGTLLEGPGRPAADGIG). A compositionally biased stretch (low complexity) spans 941–959 (DSPDSDSSLSSPHPTDTLS). Lysine 991 is covalently cross-linked (Glycyl lysine isopeptide (Lys-Gly) (interchain with G-Cter in SUMO2)). Disordered stretches follow at residues 1046–1069 (LSQNQQSSSASTSQERSSNPAPRR) and 1084–1104 (FQHGSPLHSTGHPHLAPAPAH). Composition is skewed to low complexity over residues 1047-1063 (SQNQQSSSASTSQERSS) and 1095-1104 (HPHLAPAPAH). Serine 1200 is modified (phosphoserine). Lysine 1203 participates in a covalent cross-link: Glycyl lysine isopeptide (Lys-Gly) (interchain with G-Cter in SUMO).

The protein belongs to the protein kinase superfamily. CMGC Ser/Thr protein kinase family. HIPK subfamily. In terms of assembly, interacts with Nkx1-2, Nkx2-5, MYB, PARK7, DAXX and p53/TP53. Part of a cytoplasmic complex made of HIPK1, DAB2IP and MAP3K5 in response to TNF. This complex formation promotes MAP3K5-JNK activation and subsequent apoptosis. Post-translationally, phosphorylated and activated by JNK1. Autophosphorylated. Sumoylated. When conjugated it is directed to nuclear speckles. SENP1-mediated desumoylation is mediated by TNF in response to stress stimuli, triggering transient translocation from nucleus to cytoplasm. As to expression, ubiquitously expressed, with high levels in reproductive tissues. Expressed in the epithelial layer of mammary gland, uterus and epididymis, in the corpus luteum, and in post-meiotic round spermatids.

The protein localises to the nucleus. It localises to the cytoplasm. Its subcellular location is the nucleus speckle. It catalyses the reaction L-seryl-[protein] + ATP = O-phospho-L-seryl-[protein] + ADP + H(+). It carries out the reaction L-threonyl-[protein] + ATP = O-phospho-L-threonyl-[protein] + ADP + H(+). Serine/threonine-protein kinase involved in transcription regulation and TNF-mediated cellular apoptosis. Plays a role as a corepressor for homeodomain transcription factors. Phosphorylates DAXX and MYB. Phosphorylates DAXX in response to stress, and mediates its translocation from the nucleus to the cytoplasm. Inactivates MYB transcription factor activity by phosphorylation. Prevents MAP3K5-JNK activation in the absence of TNF. TNF triggers its translocation to the cytoplasm in response to stress stimuli, thus activating nuclear MAP3K5-JNK by derepression and promoting apoptosis. May be involved in anti-oxidative stress responses. Involved in the regulation of eye size, lens formation and retinal lamination during late embryogenesis. Promotes angiogenesis and to be involved in erythroid differentiation. May be involved in malignant squamous cell tumor formation. Phosphorylates PAGE4 at 'Thr-51' which is critical for the ability of PAGE4 to potentiate the transcriptional activator activity of JUN. This chain is Homeodomain-interacting protein kinase 1 (Hipk1), found in Mus musculus (Mouse).